Reading from the N-terminus, the 79-residue chain is uncharacterized protein (79 aa).

This is an uncharacterized protein from Escherichia coli (strain K12).